The following is a 761-amino-acid chain: Protein PHTF1 (761 aa).

A PHTF domain is found at 6–150 (RDAISWYQKK…VHCQIVSTQI (145 aa)). The next 3 helical transmembrane spans lie at 77-97 (GLVRVVFFPLFSSWWIQVTSL), 99-119 (IFVWLLLLYLMQVTAVVLYLL), and 121-141 (PIVSASEVLGPLCLMLLMGTV). A disordered region spans residues 152 to 184 (RPSGNNGNRRRRKLRKTVNGDGSRDNGNNSPDK). Residues 170–181 (NGDGSRDNGNNS) are compositionally biased toward low complexity. Residues asparagine 179 and asparagine 224 are each glycosylated (N-linked (GlcNAc...) asparagine). 5 positions are modified to phosphoserine: serine 272, serine 276, serine 277, serine 333, and serine 335. The segment at 345-414 (VFSQGSRSGM…NTIHSGTKRD (70 aa)) is disordered. The span at 347–363 (SQGSRSGMSGGSRSLNL) shows a compositional bias: low complexity. A glycan (N-linked (GlcNAc...) asparagine) is linked at asparagine 362. The segment covering 364-375 (SRRDSESTRHDS) has biased composition (basic and acidic residues). Asparagine 430 carries N-linked (GlcNAc...) asparagine glycosylation. Transmembrane regions (helical) follow at residues 472–492 (GVGYQMLGNAVTVGLALFPFL), 514–534 (TLFCGAPPVTPVVILSIINFI), 610–630 (VVVSSVFLLTLSIAFICCAQV), and 644–664 (WEFLIWETALLLFLLRLASLG). N-linked (GlcNAc...) asparagine glycans are attached at residues asparagine 673 and asparagine 732. A helical membrane pass occupies residues 736–756 (VVILSAVSGVISDLLGFNIRL).

In terms of assembly, interacts with FEM1B. As to expression, widely expressed with highest levels in testis.

Its subcellular location is the endoplasmic reticulum membrane. It localises to the golgi apparatus. It is found in the cis-Golgi network membrane. In Mus musculus (Mouse), this protein is Protein PHTF1.